We begin with the raw amino-acid sequence, 221 residues long: GTP cyclohydrolase 1 (221 aa).

Zn(2+)-binding residues include cysteine 111, histidine 114, and cysteine 182.

This sequence belongs to the GTP cyclohydrolase I family. As to quaternary structure, homomer.

The catalysed reaction is GTP + H2O = 7,8-dihydroneopterin 3'-triphosphate + formate + H(+). The protein operates within cofactor biosynthesis; 7,8-dihydroneopterin triphosphate biosynthesis; 7,8-dihydroneopterin triphosphate from GTP: step 1/1. The chain is GTP cyclohydrolase 1 from Erwinia tasmaniensis (strain DSM 17950 / CFBP 7177 / CIP 109463 / NCPPB 4357 / Et1/99).